Reading from the N-terminus, the 306-residue chain is Pantothenate kinase (306 aa).

Position 91 to 98 (91 to 98 (GSVAVGKS)) interacts with ATP.

It belongs to the prokaryotic pantothenate kinase family.

It is found in the cytoplasm. It catalyses the reaction (R)-pantothenate + ATP = (R)-4'-phosphopantothenate + ADP + H(+). It functions in the pathway cofactor biosynthesis; coenzyme A biosynthesis; CoA from (R)-pantothenate: step 1/5. The sequence is that of Pantothenate kinase from Streptococcus mutans serotype c (strain ATCC 700610 / UA159).